We begin with the raw amino-acid sequence, 243 residues long: 1-(5-phosphoribosyl)-5-[(5-phosphoribosylamino)methylideneamino] imidazole-4-carboxamide isomerase (243 aa).

Residue aspartate 10 is the Proton acceptor of the active site. Aspartate 129 serves as the catalytic Proton donor.

Belongs to the HisA/HisF family.

It is found in the cytoplasm. It carries out the reaction 1-(5-phospho-beta-D-ribosyl)-5-[(5-phospho-beta-D-ribosylamino)methylideneamino]imidazole-4-carboxamide = 5-[(5-phospho-1-deoxy-D-ribulos-1-ylimino)methylamino]-1-(5-phospho-beta-D-ribosyl)imidazole-4-carboxamide. It participates in amino-acid biosynthesis; L-histidine biosynthesis; L-histidine from 5-phospho-alpha-D-ribose 1-diphosphate: step 4/9. This Nocardia farcinica (strain IFM 10152) protein is 1-(5-phosphoribosyl)-5-[(5-phosphoribosylamino)methylideneamino] imidazole-4-carboxamide isomerase.